Here is a 240-residue protein sequence, read N- to C-terminus: tRNA (guanine-N(1)-)-methyltransferase (240 aa).

S-adenosyl-L-methionine contacts are provided by residues Gly112 and 132–137; that span reads LGDFVL.

Belongs to the RNA methyltransferase TrmD family. Homodimer.

The protein resides in the cytoplasm. The enzyme catalyses guanosine(37) in tRNA + S-adenosyl-L-methionine = N(1)-methylguanosine(37) in tRNA + S-adenosyl-L-homocysteine + H(+). Specifically methylates guanosine-37 in various tRNAs. This is tRNA (guanine-N(1)-)-methyltransferase from Cyanothece sp. (strain PCC 7425 / ATCC 29141).